The sequence spans 361 residues: Spermatogenesis-associated protein 17 (361 aa).

IQ domains follow at residues 32 to 61 (ENDA…IVTI), 55 to 84 (LNRI…VAYY), and 91 to 120 (YNAM…LKEY).

The protein resides in the cytoplasm. The sequence is that of Spermatogenesis-associated protein 17 (SPATA17) from Macaca fascicularis (Crab-eating macaque).